A 272-amino-acid chain; its full sequence is Octanoyltransferase (272 aa).

A compositionally biased stretch (polar residues) spans 1–12 (MQQDPPTSQPHT). Residues 1–20 (MQQDPPTSQPHTPQIVDGVK) are disordered. Residues 65-255 (HQRPNTVIYV…EMMSFQPYEM (191 aa)) form the BPL/LPL catalytic domain. Residues 103-110 (RGGEITWH), 175-177 (AIG), and 188-190 (GFA) contribute to the substrate site. Cysteine 206 serves as the catalytic Acyl-thioester intermediate.

Belongs to the LipB family.

It localises to the cytoplasm. The catalysed reaction is octanoyl-[ACP] + L-lysyl-[protein] = N(6)-octanoyl-L-lysyl-[protein] + holo-[ACP] + H(+). It functions in the pathway protein modification; protein lipoylation via endogenous pathway; protein N(6)-(lipoyl)lysine from octanoyl-[acyl-carrier-protein]: step 1/2. Catalyzes the transfer of endogenously produced octanoic acid from octanoyl-acyl-carrier-protein onto the lipoyl domains of lipoate-dependent enzymes. Lipoyl-ACP can also act as a substrate although octanoyl-ACP is likely to be the physiological substrate. The polypeptide is Octanoyltransferase (Cutibacterium acnes (strain DSM 16379 / KPA171202) (Propionibacterium acnes)).